The sequence spans 210 residues: MAPTVERKNINLAPLKAAGVPIFFIVGGPGSGKGTQCDKIVAKYGLTHLSSGDLLRDEVKSGSPRGAQLTAIMESGALVPLEVVLDLVKEAMLKAIEKGSKGFLIDGYPREVAQGQQFESEIQEAKLVLFFDVAEETLVKRLLHRAQTSGRADDNADTIKKRLHTFVTSTAPVVDYYESKGKLVRINAEGSVDDIFAVVVANLDKATSKL.

ATP is bound at residue 30-35; sequence GSGKGT. The segment at 50 to 79 is NMP; sequence SSGDLLRDEVKSGSPRGAQLTAIMESGALV. AMP is bound by residues serine 51, arginine 56, 77–79, 107–110, and glutamine 114; these read ALV and GYPR. Residues 144 to 154 are LID; it reads HRAQTSGRADD. An ATP-binding site is contributed by arginine 145. The AMP site is built by arginine 151 and arginine 162. Glycine 190 provides a ligand contact to ATP.

The protein belongs to the adenylate kinase family. AK1 subfamily. In terms of assembly, monomer.

It localises to the cytoplasm. It carries out the reaction AMP + ATP = 2 ADP. In terms of biological role, catalyzes the reversible transfer of the terminal phosphate group between ATP and AMP. Plays an important role in cellular energy homeostasis and in adenine nucleotide metabolism. The sequence is that of Adenylate kinase isoenzyme 1 from Caenorhabditis elegans.